A 497-amino-acid polypeptide reads, in one-letter code: Cytochrome P450 98A8 (497 aa).

A helical transmembrane segment spans residues Ile-2–Tyr-19. Cys-431 serves as a coordination point for heme.

It belongs to the cytochrome P450 family. Requires heme as cofactor. In terms of tissue distribution, strongly expressed in inflorescence tips, young flower buds, seeds, stamen, tapetum and pollen.

It localises to the membrane. In terms of biological role, acts redundantly with CYP98A9 as tricoumaroylspermidine meta-hydroxylase. Also catalyzes the meta-hydroxylation of the three triferuloylspermidine phenolic rings. Unable to use 5-O-(4-coumaroyl) D-quinate or 5-O-(4-coumaroyl) shikimate as substrates. This is Cytochrome P450 98A8 (CYP98A8) from Arabidopsis thaliana (Mouse-ear cress).